The sequence spans 614 residues: Maltose permease MAL31 (614 aa).

A disordered region spans residues 1 to 48 (MKGLSSLINRKKDRNDSHLDEIENGVNATEFNSIEMEEQGKKSDFDLS). Residues 1 to 108 (MKGLSSLINR…AAAWSLLVST (108 aa)) are Cytoplasmic-facing. The segment covering 38–48 (EQGKKSDFDLS) has biased composition (basic and acidic residues). Residues 109-129 (TLIQEGYDTAILGAFYALPVF) form a helical membrane-spanning segment. Residues 130 to 144 (QKKYGSLNSNTGDYE) lie on the Extracellular side of the membrane. The helical transmembrane segment at 145-165 (ISVSWQIGLCLCYMAGEIVGL) threads the bilayer. At 166-180 (QMTGPSVDYMGNRYT) the chain is on the cytoplasmic side. A helical transmembrane segment spans residues 181 to 201 (LIMALFFLAAFIFILYFCKSL). Gly-202 is a topological domain (extracellular). The chain crosses the membrane as a helical span at residues 203–223 (MIAVGQALCGMPWGCFQCLTV). Over 224-236 (SYASEICPLALRY) the chain is Cytoplasmic. Residues 237 to 257 (YLTTYSNLCWAFGQLFAAGIM) traverse the membrane as a helical segment. At 258-272 (KNSQNKYANSELGYK) the chain is on the extracellular side. A helical transmembrane segment spans residues 273–293 (LPFALQWIWPLPLAVGIFFAP). Topologically, residues 294 to 364 (ESPWWLVKKG…KDGINRRRTR (71 aa)) are cytoplasmic. The helical transmembrane segment at 365–385 (IACLCWIGQCSCGASLIGYST) threads the bilayer. At 386-398 (YFYEKAGVSTDTA) the chain is on the extracellular side. The helical transmembrane segment at 399-419 (FTFSIIQYCLGIAATFISWWA) threads the bilayer. Residues 420-427 (SKYCGRFD) are Cytoplasmic-facing. Residues 428-448 (LYAFGLAFQAIMFFIIGGLGC) form a helical membrane-spanning segment. The Extracellular portion of the chain corresponds to 449-460 (SDTHGAKMGSGA). A helical transmembrane segment spans residues 461 to 481 (LLMVVAFFYNLGIAPVVFCLV). The Cytoplasmic portion of the chain corresponds to 482-493 (SEIPSSRLRTKT). A helical membrane pass occupies residues 494-514 (IILARNAYNVIQVVVTVLIMY). Over 515–526 (QLNSEKWNWGAK) the chain is Extracellular. The chain crosses the membrane as a helical span at residues 527–547 (SGFFWGGFCLATLAWAVVDLP). Topologically, residues 548–614 (ETAGRTFIEI…GRNTSSVVNK (67 aa)) are cytoplasmic. Positions 595–614 (EDLETSVVDEGRNTSSVVNK) are disordered.

The protein belongs to the major facilitator superfamily. Sugar transporter (TC 2.A.1.1) family.

The protein localises to the membrane. Its function is as follows. High-affinity uptake of maltose and maltotriose. Also transports turanose but not alpha-methylglucoside, melezitose or trehalose. This chain is Maltose permease MAL31 (MAL31), found in Saccharomyces cerevisiae (strain ATCC 204508 / S288c) (Baker's yeast).